A 441-amino-acid chain; its full sequence is tRNA modification GTPase MnmE (441 aa).

The (6S)-5-formyl-5,6,7,8-tetrahydrofolate site is built by Arg21, Glu79, and Lys118. Positions 214-367 constitute a TrmE-type G domain; sequence GIHITILGAP…LVAELARVVE (154 aa). GTP contacts are provided by residues 224–229, 243–249, and 268–271; these read NAGKSS, SAQAGTT, and DTAG. 2 residues coordinate Mg(2+): Ser228 and Thr249. Lys441 contributes to the (6S)-5-formyl-5,6,7,8-tetrahydrofolate binding site.

It belongs to the TRAFAC class TrmE-Era-EngA-EngB-Septin-like GTPase superfamily. TrmE GTPase family. In terms of assembly, homodimer. Heterotetramer of two MnmE and two MnmG subunits. It depends on K(+) as a cofactor.

It localises to the cytoplasm. Functionally, exhibits a very high intrinsic GTPase hydrolysis rate. Involved in the addition of a carboxymethylaminomethyl (cmnm) group at the wobble position (U34) of certain tRNAs, forming tRNA-cmnm(5)s(2)U34. In Paramagnetospirillum magneticum (strain ATCC 700264 / AMB-1) (Magnetospirillum magneticum), this protein is tRNA modification GTPase MnmE.